Reading from the N-terminus, the 181-residue chain is Inner membrane-spanning protein YciB (181 aa).

5 consecutive transmembrane segments (helical) span residues 10–30 (LIIF…GALI), 50–70 (MHLI…VFHD), 72–92 (AFIK…LGVS), 118–138 (VTWY…YVAF), and 148–168 (FKVF…VFYL).

Belongs to the YciB family.

It localises to the cell inner membrane. In terms of biological role, plays a role in cell envelope biogenesis, maintenance of cell envelope integrity and membrane homeostasis. This Shewanella sp. (strain ANA-3) protein is Inner membrane-spanning protein YciB.